The following is a 122-amino-acid chain: Large ribosomal subunit protein bL19 (122 aa).

This sequence belongs to the bacterial ribosomal protein bL19 family.

Functionally, this protein is located at the 30S-50S ribosomal subunit interface and may play a role in the structure and function of the aminoacyl-tRNA binding site. This chain is Large ribosomal subunit protein bL19 (rplS), found in Synechocystis sp. (strain ATCC 27184 / PCC 6803 / Kazusa).